Consider the following 143-residue polypeptide: Small ribosomal subunit protein uS12 (143 aa).

A compositionally biased stretch (basic residues) spans 1–19 (MGKPRGIRTARKHVNHRRE). Positions 1 to 21 (MGKPRGIRTARKHVNHRREQR) are disordered. Residue Pro62 is modified to Hydroxyproline.

The protein belongs to the universal ribosomal protein uS12 family. In terms of assembly, component of the 40S small ribosomal subunit.

It localises to the cytoplasm. The protein localises to the cytosol. It is found in the rough endoplasmic reticulum. This is Small ribosomal subunit protein uS12 (RpS23) from Papilio dardanus (African swallowtail butterfly).